Consider the following 140-residue polypeptide: MPTINQLVRKSRKALEKKSTAPALQKGYNSLNKKVTDASAPQKRGVCTSVKTVTPRKPNSALRKVARVRLTNGIEVSAYIPGEGHNLQEHSVVLIRGGRVKDLPGVRYHILRGTLDTAGVDKRRQSRSKYGAKRPKEAKK.

The disordered stretch occupies residues 1-28 (MPTINQLVRKSRKALEKKSTAPALQKGY). At aspartate 102 the chain carries 3-methylthioaspartic acid. Positions 119–140 (GVDKRRQSRSKYGAKRPKEAKK) are disordered. Positions 124–140 (RQSRSKYGAKRPKEAKK) are enriched in basic residues.

The protein belongs to the universal ribosomal protein uS12 family. In terms of assembly, part of the 30S ribosomal subunit. Contacts proteins S8 and S17. May interact with IF1 in the 30S initiation complex.

In terms of biological role, with S4 and S5 plays an important role in translational accuracy. Its function is as follows. Interacts with and stabilizes bases of the 16S rRNA that are involved in tRNA selection in the A site and with the mRNA backbone. Located at the interface of the 30S and 50S subunits, it traverses the body of the 30S subunit contacting proteins on the other side and probably holding the rRNA structure together. The combined cluster of proteins S8, S12 and S17 appears to hold together the shoulder and platform of the 30S subunit. In Clostridioides difficile (strain 630) (Peptoclostridium difficile), this protein is Small ribosomal subunit protein uS12.